A 546-amino-acid polypeptide reads, in one-letter code: Putative inactive G-type lectin S-receptor-like serine/threonine-protein kinase SRK (546 aa).

Residues 1-31 (MRGELPNKHHSYTFFVFLFFFLILFPDLSIS) form the signal peptide. Topologically, residues 32 to 441 (VNTLSATESL…FGERRTIRGK (410 aa)) are extracellular. Residues 34 to 154 (TLSATESLTI…KINESDEFLW (121 aa)) form the Bulb-type lectin domain. 4 N-linked (GlcNAc...) asparagine glycosylation sites follow: N46, N120, N147, and N243. Residues 293–329 (PKDTCDLYGICGPYAYCDMSTSPTCNCIKGFQPLSPQ) form the EGF-like; atypical domain. Disulfide bonds link C297–C309, C303–C317, C378–C403, and C382–C388. In terms of domain architecture, PAN spans 348 to 428 (CGEDRFFRLM…DGQDLFVRLA (81 aa)). N387 is a glycosylation site (N-linked (GlcNAc...) asparagine). The helical transmembrane segment at 442-462 (IIGLIIGISLMLVLSFIIYCF) threads the bilayer. At 463–546 (WKKKQKRARA…IVYKGRLLDG (84 aa)) the chain is on the cytoplasmic side. The Protein kinase domain occupies 524–546 (FSDSNILGRGGFGIVYKGRLLDG). 530 to 538 (LGRGGFGIV) provides a ligand contact to ATP.

The protein belongs to the protein kinase superfamily. Ser/Thr protein kinase family.

It localises to the cell membrane. Truncated and inactivated form of SRK, the female specificity determinant of self-incompatibility when active. Most A.thaliana cultivars contain such an inactive form and thus, are self-fertiles. The protein is Putative inactive G-type lectin S-receptor-like serine/threonine-protein kinase SRK (PSEUDOSRKA) of Arabidopsis thaliana (Mouse-ear cress).